The following is a 312-amino-acid chain: Olfactory receptor 51A7 (312 aa).

The Extracellular segment spans residues 1-25; that stretch reads MSVLNNSEVKLFLLIGIPGLEHAHI. N-linked (GlcNAc...) asparagine glycosylation occurs at N5. The helical transmembrane segment at 26–46 threads the bilayer; that stretch reads WFSIPICLMYLLAIMGNCTIL. Residues 47-54 lie on the Cytoplasmic side of the membrane; that stretch reads FIIKTEPS. The chain crosses the membrane as a helical span at residues 55–75; the sequence is LHEPMYYFLAMLAVSDMGLSL. Residues 76–99 are Extracellular-facing; it reads SSLPTMLRVFLFNAMGISPNACFA. A disulfide bond links C97 and C189. The chain crosses the membrane as a helical span at residues 100-120; sequence QEFFIHGFTVMESSVLLIMSL. Topologically, residues 121-139 are cytoplasmic; it reads DRFLAIHNPLRYSSILTSN. Residues 140-160 form a helical membrane-spanning segment; it reads RVAKMGLILAIRSILLVIPFP. Topologically, residues 161-196 are extracellular; the sequence is FTLRRLKYCQKNLLSHSYCLHQDTMKLACSDNKTNV. N192 carries N-linked (GlcNAc...) asparagine glycosylation. A helical membrane pass occupies residues 197–216; the sequence is IYGFFIALCTMLDLALIVLS. Topologically, residues 217-236 are cytoplasmic; sequence YVLILKTILSIASLAERLKA. The chain crosses the membrane as a helical span at residues 237 to 257; the sequence is LNTCVSHICAVLTFYVPIITL. The Extracellular portion of the chain corresponds to 258 to 272; it reads AAMHHFAKHKSPLVV. Residues 273–293 traverse the membrane as a helical segment; that stretch reads ILIADMFLLVPPLMNPIVYCV. Over 294 to 312 the chain is Cytoplasmic; it reads KTRQIWEKILGKLLNVCGR.

Belongs to the G-protein coupled receptor 1 family.

The protein localises to the cell membrane. Its function is as follows. Odorant receptor. In Homo sapiens (Human), this protein is Olfactory receptor 51A7 (OR51A7).